Here is a 223-residue protein sequence, read N- to C-terminus: Putative germin-like protein subfamily 1 member 12 (223 aa).

Positions 1-24 (MNMKNLYLAILYLLAASTLPFAIA) are cleaved as a signal peptide. Cys-34 and Cys-51 form a disulfide bridge. The Cupin type-1 domain occupies 65–216 (SGLDKARTTE…AFQLDPKVII (152 aa)). An N-linked (GlcNAc...) asparagine glycan is attached at Asn-81. Residues His-114, His-116, and Glu-121 each coordinate Mn(2+). Asn-145 carries an N-linked (GlcNAc...) asparagine glycan. Residue His-162 participates in Mn(2+) binding.

The protein belongs to the germin family. In terms of assembly, oligomer (believed to be a pentamer but probably hexamer).

Its subcellular location is the secreted. The protein resides in the extracellular space. It localises to the apoplast. May play a role in plant defense. Probably has no oxalate oxidase activity even if the active site is conserved. This is Putative germin-like protein subfamily 1 member 12 from Arabidopsis thaliana (Mouse-ear cress).